The primary structure comprises 121 residues: Small ribosomal subunit protein uS13 (121 aa).

The interval 92–121 (RRGLPVRGQKTKNNSRTRKGPRKTMANKKK) is disordered.

Belongs to the universal ribosomal protein uS13 family. Part of the 30S ribosomal subunit. Forms a loose heterodimer with protein S19. Forms two bridges to the 50S subunit in the 70S ribosome.

Located at the top of the head of the 30S subunit, it contacts several helices of the 16S rRNA. In the 70S ribosome it contacts the 23S rRNA (bridge B1a) and protein L5 of the 50S subunit (bridge B1b), connecting the 2 subunits; these bridges are implicated in subunit movement. Contacts the tRNAs in the A and P-sites. This Oceanobacillus iheyensis (strain DSM 14371 / CIP 107618 / JCM 11309 / KCTC 3954 / HTE831) protein is Small ribosomal subunit protein uS13.